Consider the following 184-residue polypeptide: Probable RNA 2'-phosphotransferase (184 aa).

The protein belongs to the KptA/TPT1 family.

In terms of biological role, removes the 2'-phosphate from RNA via an intermediate in which the phosphate is ADP-ribosylated by NAD followed by a presumed transesterification to release the RNA and generate ADP-ribose 1''-2''-cyclic phosphate (APPR&gt;P). May function as an ADP-ribosylase. The chain is Probable RNA 2'-phosphotransferase from Escherichia coli O9:H4 (strain HS).